Here is a 401-residue protein sequence, read N- to C-terminus: 8-amino-7-oxononanoate synthase (401 aa).

Arg-24 provides a ligand contact to substrate. 111-112 contributes to the pyridoxal 5'-phosphate binding site; that stretch reads GF. Substrate is bound at residue His-137. Pyridoxal 5'-phosphate is bound by residues Ser-183, His-211, and Thr-240. Position 243 is an N6-(pyridoxal phosphate)lysine (Lys-243). A substrate-binding site is contributed by Thr-357.

Belongs to the class-II pyridoxal-phosphate-dependent aminotransferase family. BioF subfamily. Homodimer. Pyridoxal 5'-phosphate is required as a cofactor.

The catalysed reaction is 6-carboxyhexanoyl-[ACP] + L-alanine + H(+) = (8S)-8-amino-7-oxononanoate + holo-[ACP] + CO2. It functions in the pathway cofactor biosynthesis; biotin biosynthesis. Functionally, catalyzes the decarboxylative condensation of pimeloyl-[acyl-carrier protein] and L-alanine to produce 8-amino-7-oxononanoate (AON), [acyl-carrier protein], and carbon dioxide. This is 8-amino-7-oxononanoate synthase from Xanthomonas campestris pv. campestris (strain B100).